A 357-amino-acid chain; its full sequence is Sorbitol dehydrogenase 2 (357 aa).

Cysteine 43 lines the Zn(2+) pocket. Residue tyrosine 49 coordinates substrate. The Zn(2+) site is built by histidine 68 and glutamate 69. Position 154 (glutamate 154) interacts with substrate. NAD(+)-binding positions include aspartate 202, lysine 207, 275 to 277 (VGM), and 299 to 301 (CFR). 2 residues coordinate substrate: arginine 301 and tyrosine 302.

Belongs to the zinc-containing alcohol dehydrogenase family. Homotetramer. It depends on Zn(2+) as a cofactor.

It carries out the reaction keto-D-fructose + NADH + H(+) = D-sorbitol + NAD(+). The enzyme catalyses xylitol + NAD(+) = D-xylulose + NADH + H(+). In terms of biological role, polyol dehydrogenase that catalyzes the reversible NAD(+)-dependent oxidation of various sugar alcohols. Is active with D-sorbitol (D-glucitol) and xylitol as substrates, leading to the C2-oxidized product D-fructose and D-xylulose, respectively. The sequence is that of Sorbitol dehydrogenase 2 (SOR2) from Saccharomyces cerevisiae (strain ATCC 204508 / S288c) (Baker's yeast).